A 133-amino-acid polypeptide reads, in one-letter code: Histone H2A (133 aa).

Residues 1–10 (MTGGKSGGKA) show a composition bias toward gly residues. Residues 1–25 (MTGGKSGGKASGSKSSQSRSSKAGL) are disordered. An N6-acetyllysine mark is found at lysine 5 and lysine 9. Residues 11–24 (SGSKSSQSRSSKAG) show a composition bias toward low complexity. The residue at position 106 (glutamine 106) is an N5-methylglutamine. Phosphoserine is present on serine 130. Residues 130 to 131 (SQ) carry the [ST]-Q motif motif.

It belongs to the histone H2A family. As to quaternary structure, the nucleosome is a histone octamer containing two molecules each of H2A, H2B, H3 and H4 assembled in one H3-H4 heterotetramer and two H2A-H2B heterodimers. The octamer wraps approximately 147 bp of DNA. Phosphorylated to form H2AS128ph (gamma-H2A) in response to DNA double-strand breaks (DSBs) generated by exogenous genotoxic agents and by stalled replication forks. Phosphorylation is dependent on the DNA damage checkpoint kinases MEC1/ATR and TEL1/ATM, spreads on either side of a detected DSB site and may mark the surrounding chromatin for recruitment of proteins required for DNA damage signaling and repair. Gamma-H2A is removed from the DNA prior to the strand invasion-primer extension step of the repair process and subsequently dephosphorylated. Dephosphorylation is necessary for efficient recovery from the DNA damage checkpoint. Post-translationally, acetylated by ESA1 to form H2AK4ac and H2AK7ac.

Its subcellular location is the nucleus. It is found in the chromosome. In terms of biological role, core component of nucleosome which plays a central role in DNA double strand break (DSB) repair. Nucleosomes wrap and compact DNA into chromatin, limiting DNA accessibility to the cellular machineries which require DNA as a template. Histones thereby play a central role in transcription regulation, DNA repair, DNA replication and chromosomal stability. DNA accessibility is regulated via a complex set of post-translational modifications of histones, also called histone code, and nucleosome remodeling. This is Histone H2A (HTA1) from Coccidioides immitis (strain RS) (Valley fever fungus).